The primary structure comprises 317 residues: UDP-3-O-acylglucosamine N-acyltransferase (317 aa).

Catalysis depends on His229, which acts as the Proton acceptor.

Belongs to the transferase hexapeptide repeat family. LpxD subfamily. As to quaternary structure, homotrimer.

The enzyme catalyses a UDP-3-O-[(3R)-3-hydroxyacyl]-alpha-D-glucosamine + a (3R)-hydroxyacyl-[ACP] = a UDP-2-N,3-O-bis[(3R)-3-hydroxyacyl]-alpha-D-glucosamine + holo-[ACP] + H(+). Its pathway is bacterial outer membrane biogenesis; LPS lipid A biosynthesis. Catalyzes the N-acylation of UDP-3-O-acylglucosamine using 3-hydroxyacyl-ACP as the acyl donor. Is involved in the biosynthesis of lipid A, a phosphorylated glycolipid that anchors the lipopolysaccharide to the outer membrane of the cell. The protein is UDP-3-O-acylglucosamine N-acyltransferase of Campylobacter curvus (strain 525.92).